A 151-amino-acid chain; its full sequence is Ribosomal RNA large subunit methyltransferase H (151 aa).

S-adenosyl-L-methionine-binding positions include Gly100 and 119–124; that span reads LSKMTF.

Belongs to the RNA methyltransferase RlmH family. In terms of assembly, homodimer.

It localises to the cytoplasm. The enzyme catalyses pseudouridine(1915) in 23S rRNA + S-adenosyl-L-methionine = N(3)-methylpseudouridine(1915) in 23S rRNA + S-adenosyl-L-homocysteine + H(+). Its function is as follows. Specifically methylates the pseudouridine at position 1915 (m3Psi1915) in 23S rRNA. The protein is Ribosomal RNA large subunit methyltransferase H of Thermotoga sp. (strain RQ2).